The sequence spans 200 residues: Arylesterase (200 aa).

The first 19 residues, 1–19 (MIRLLSLVLFFCLSAASQA), serve as a signal peptide directing secretion. The Nucleophile role is filled by S29. Residues D176 and H179 contribute to the active site.

This sequence belongs to the 'GDSL' lipolytic enzyme family. Homodimer.

It catalyses the reaction a phenyl acetate + H2O = a phenol + acetate + H(+). In terms of biological role, favors the hydrolysis of several arylesters. This Vibrio mimicus protein is Arylesterase.